Here is a 744-residue protein sequence, read N- to C-terminus: CCR4-NOT transcription complex subunit 10 (744 aa).

Positions 1–16 are enriched in basic and acidic residues; sequence MAADKPADQGAEKHEG. Positions 1–25 are disordered; sequence MAADKPADQGAEKHEGTGQSSGITD. At Ala-2 the chain carries N-acetylalanine. The stretch at 74–107 forms a coiled coil; that stretch reads KSNQTTTDNLRQTLNQLKNQVHSAVEEMDGLDDV. Over residues 183–199 the composition is skewed to low complexity; it reads NNNKNGKNETGNNNNKD. Disordered stretches follow at residues 183–204, 477–521, and 602–634; these read NNNK…SNHK, QDPK…PPSS, and VSLG…PQCY. Over residues 484–495 the composition is skewed to polar residues; that stretch reads GAKNSNQLGGNT. Positions 496–506 are enriched in low complexity; sequence ESSESSETCSS. Positions 602 to 612 are enriched in polar residues; the sequence is VSLGISSNEQD.

Belongs to the CNOT10 family. As to quaternary structure, component of the CCR4-NOT complex; distinct complexes seem to exist that differ in the participation of probably mutually exclusive catalytic subunits. CNOT10 and CNOT11 form a subcomplex docked to the CNOT1 scaffold.

The protein localises to the cytoplasm. It is found in the nucleus. Its function is as follows. Component of the CCR4-NOT complex which is one of the major cellular mRNA deadenylases and is linked to various cellular processes including bulk mRNA degradation, miRNA-mediated repression, translational repression during translational initiation and general transcription regulation. Additional complex functions may be a consequence of its influence on mRNA expression. Is not required for association of CNOT7 to the CCR4-NOT complex. The protein is CCR4-NOT transcription complex subunit 10 (CNOT10) of Homo sapiens (Human).